The primary structure comprises 82 residues: uncharacterized protein (82 aa).

Helical transmembrane passes span 8 to 28 (LLSAAGILLLALLSCLLLPAP) and 50 to 70 (LYTVLFCLWFLALGAIEYLVL).

It is found in the cell membrane. This is an uncharacterized protein from Klebsiella pneumoniae.